Reading from the N-terminus, the 142-residue chain is Putative pre-16S rRNA nuclease (142 aa).

This sequence belongs to the YqgF nuclease family.

The protein resides in the cytoplasm. Functionally, could be a nuclease involved in processing of the 5'-end of pre-16S rRNA. This Staphylococcus aureus (strain JH1) protein is Putative pre-16S rRNA nuclease.